We begin with the raw amino-acid sequence, 142 residues long: Large ribosomal subunit protein uL11 (142 aa).

Belongs to the universal ribosomal protein uL11 family. In terms of assembly, part of the ribosomal stalk of the 50S ribosomal subunit. Interacts with L10 and the large rRNA to form the base of the stalk. L10 forms an elongated spine to which L12 dimers bind in a sequential fashion forming a multimeric L10(L12)X complex. In terms of processing, one or more lysine residues are methylated.

In terms of biological role, forms part of the ribosomal stalk which helps the ribosome interact with GTP-bound translation factors. The protein is Large ribosomal subunit protein uL11 of Serratia proteamaculans (strain 568).